A 155-amino-acid chain; its full sequence is Small ribosomal subunit protein uS7 (155 aa).

The protein belongs to the universal ribosomal protein uS7 family. As to quaternary structure, part of the 30S ribosomal subunit. Contacts proteins S9 and S11.

Its function is as follows. One of the primary rRNA binding proteins, it binds directly to 16S rRNA where it nucleates assembly of the head domain of the 30S subunit. Is located at the subunit interface close to the decoding center, probably blocks exit of the E-site tRNA. The protein is Small ribosomal subunit protein uS7 of Chlorobium chlorochromatii (strain CaD3).